The primary structure comprises 262 residues: Putative hydro-lyase Sca_2211 (262 aa).

Belongs to the D-glutamate cyclase family.

The sequence is that of Putative hydro-lyase Sca_2211 from Staphylococcus carnosus (strain TM300).